The following is a 248-amino-acid chain: MTGMVTERRSVHFIAEALTENCREIFERRRHVLVGISPFNSRFSEDYIYRLIGWAKAQFKSVSVLLAGHEAANLLEALGTPRGKAERKVRKEVSRNRRFAERALVAHGGDPKAIHTFSDFIDNKAYQLLRQEVEHAFFEQPHFRHACLDMSREAIIGRARGVSLMMEEVSEDMLNLAVEYVIAELPFFIGAPDILEVEETLLAYHRPWKLGEKISNHEFSICMRPNQGYLIVQEMAQMLSEKRITSEG.

Residue serine 37 is the Nucleophile of the active site. Substrate contacts are provided by residues asparagine 40, 180–184 (YVIAE), tyrosine 204, and 209–210 (KL).

The protein belongs to the CDPS family. As to quaternary structure, monomer.

It catalyses the reaction 2 L-leucyl-tRNA(Leu) = cyclo(L-leucyl-L-leucyl) + 2 tRNA(Leu) + 2 H(+). Its function is as follows. Involved in the biosynthesis of pulcherrimin, a red extracellular pigment. It uses activated amino acids in the form of aminoacyl-tRNAs (aa-tRNAs) as substrates to catalyze the ATP-independent formation of cyclodipeptides which are intermediates in diketopiperazine (DKP) biosynthetic pathways. Catalyzes the formation of cyclo(L-Leu-L-Leu) (cLL) from L-leucyl-tRNA(Leu). Can also incorporate various nonpolar residues, such as L-phenylalanine, L-leucine and methionine, into cyclodipeptides. This is Cyclo(L-leucyl-L-leucyl) synthase (yvmC) from Bacillus subtilis (strain 168).